The sequence spans 325 residues: Post-GPI attachment to proteins factor 2-like (325 aa).

6 consecutive transmembrane segments (helical) span residues Val80 to Phe100, Tyr130 to Tyr150, Leu171 to Thr191, Ile205 to Gly225, Trp243 to Ala263, and Trp276 to Ile296.

Belongs to the PGAP2 family.

The protein localises to the membrane. The protein is Post-GPI attachment to proteins factor 2-like of Drosophila melanogaster (Fruit fly).